The primary structure comprises 418 residues: Tektin-1 (418 aa).

Coiled coils occupy residues 21-84, 268-308, and 336-383; these read KNQY…LEQL, LKET…DQEG, and RLIK…ENTI. The tract at residues 399-418 is disordered; it reads PRDGDDHGEWAGGSHPEAVC.

Belongs to the tektin family. In terms of assembly, microtubule inner protein component of sperm flagellar doublet microtubules. Post-translationally, ubiquitinated, leading to its degradation. Deubiquitinated by USP16, promoting its stability. Expressed in trachea multiciliated cells.

It localises to the cytoplasm. The protein localises to the cytoskeleton. The protein resides in the cilium axoneme. Its subcellular location is the flagellum axoneme. Its function is as follows. Microtubule inner protein (MIP) part of the dynein-decorated doublet microtubules (DMTs) in cilia and flagellar axoneme. Forms filamentous polymers in the walls of ciliary and flagellar microtubules. The protein is Tektin-1 (TEKT1) of Bos taurus (Bovine).